Reading from the N-terminus, the 255-residue chain is Triosephosphate isomerase (255 aa).

9–11 (NWK) lines the substrate pocket. His96 acts as the Electrophile in catalysis. The active-site Proton acceptor is the Glu168. Residues Gly174 and Ser213 each contribute to the substrate site.

The protein belongs to the triosephosphate isomerase family. Homodimer.

It localises to the cytoplasm. It catalyses the reaction D-glyceraldehyde 3-phosphate = dihydroxyacetone phosphate. It functions in the pathway carbohydrate biosynthesis; gluconeogenesis. The protein operates within carbohydrate degradation; glycolysis; D-glyceraldehyde 3-phosphate from glycerone phosphate: step 1/1. In terms of biological role, involved in the gluconeogenesis. Catalyzes stereospecifically the conversion of dihydroxyacetone phosphate (DHAP) to D-glyceraldehyde-3-phosphate (G3P). The chain is Triosephosphate isomerase from Buchnera aphidicola subsp. Acyrthosiphon pisum (strain APS) (Acyrthosiphon pisum symbiotic bacterium).